We begin with the raw amino-acid sequence, 430 residues long: Adenylosuccinate synthetase (430 aa).

GTP is bound by residues 12 to 18 and 40 to 42; these read GDEGKGK and GHT. The Proton acceptor role is filled by aspartate 13. Residues aspartate 13 and glycine 40 each contribute to the Mg(2+) site. Residues 13–16, 38–41, threonine 128, arginine 142, glutamine 223, threonine 238, and arginine 302 contribute to the IMP site; these read DEGK and NAGH. Catalysis depends on histidine 41, which acts as the Proton donor. 298–304 serves as a coordination point for substrate; that stretch reads TVTKRPR. GTP contacts are provided by residues arginine 304, 330–332, and 412–414; these read CVD and SVG.

This sequence belongs to the adenylosuccinate synthetase family. Homodimer. It depends on Mg(2+) as a cofactor.

The protein localises to the cytoplasm. The enzyme catalyses IMP + L-aspartate + GTP = N(6)-(1,2-dicarboxyethyl)-AMP + GDP + phosphate + 2 H(+). The protein operates within purine metabolism; AMP biosynthesis via de novo pathway; AMP from IMP: step 1/2. Functionally, plays an important role in the de novo pathway of purine nucleotide biosynthesis. Catalyzes the first committed step in the biosynthesis of AMP from IMP. In Ligilactobacillus salivarius (strain UCC118) (Lactobacillus salivarius), this protein is Adenylosuccinate synthetase.